Reading from the N-terminus, the 465-residue chain is ATP-dependent protease ATPase subunit HslU (465 aa).

Residues Val19 and 61 to 66 (GVGKTE) contribute to the ATP site. Residues 153–175 (LFQSDGSDGDDETTEQDSHDEIR) form a disordered region. The ATP site is built by Asp279, Glu343, and Arg415.

The protein belongs to the ClpX chaperone family. HslU subfamily. As to quaternary structure, a double ring-shaped homohexamer of HslV is capped on each side by a ring-shaped HslU homohexamer. The assembly of the HslU/HslV complex is dependent on binding of ATP.

The protein resides in the cytoplasm. ATPase subunit of a proteasome-like degradation complex; this subunit has chaperone activity. The binding of ATP and its subsequent hydrolysis by HslU are essential for unfolding of protein substrates subsequently hydrolyzed by HslV. HslU recognizes the N-terminal part of its protein substrates and unfolds these before they are guided to HslV for hydrolysis. This Oceanobacillus iheyensis (strain DSM 14371 / CIP 107618 / JCM 11309 / KCTC 3954 / HTE831) protein is ATP-dependent protease ATPase subunit HslU.